Reading from the N-terminus, the 227-residue chain is (S)-2-haloacid dehalogenase 1 (227 aa).

Residue aspartate 10 is the Nucleophile of the active site. Residues 11–12 (AY), arginine 41, and 118–119 (SN) each bind an (S)-2-haloacid. The interval 175-180 (SSNAWD) is important for catalytic activity.

Belongs to the HAD-like hydrolase superfamily. S-2-haloalkanoic acid dehalogenase family.

It carries out the reaction an (S)-2-haloacid + H2O = a (2R)-2-hydroxycarboxylate + a halide anion + H(+). The catalysed reaction is (S)-2-chloropropanoate + H2O = (R)-lactate + chloride + H(+). Functionally, catalyzes the hydrolytic dehalogenation of small (S)-2-haloalkanoic acids to yield the corresponding (R)-2-hydroxyalkanoic acids. Acts on acids of short chain lengths, C(2) to C(4), with inversion of configuration at C-2. Active with 2-halogenated carboxylic acids and converts only the S-isomer (or L-isomer) of 2-chloropropionic acid with inversion of configuration to produce R-lactate (or D-isomer). The chain is (S)-2-haloacid dehalogenase 1 from Pseudomonas sp. (strain CBS-3).